We begin with the raw amino-acid sequence, 124 residues long: UPF0225 protein SCO1677 (124 aa).

This sequence belongs to the UPF0225 family.

The polypeptide is UPF0225 protein SCO1677 (Streptomyces coelicolor (strain ATCC BAA-471 / A3(2) / M145)).